Here is a 52-residue protein sequence, read N- to C-terminus: Alpha-crystallin B chain (52 aa).

Belongs to the small heat shock protein (HSP20) family. In terms of assembly, homodimer. Aggregates with homologous proteins, including alpha-A-crystallin and the small heat shock protein HSPB1, to form large heteromeric complexes.

Its function is as follows. May contribute to the transparency and refractive index of the lens. The polypeptide is Alpha-crystallin B chain (CRYAB) (Turdus merula (Common blackbird)).